We begin with the raw amino-acid sequence, 285 residues long: Inhibitor of growth protein 5 (285 aa).

Residues Glu116–Met225 are disordered. Residues Lys131–Ser149 show a composition bias toward basic residues. Over residues Asn160 to Gly178 the composition is skewed to low complexity. A PHD-type zinc finger spans residues Pro232–Asp281. Residues Cys235, Cys237, Cys248, Cys253, His259, Cys262, Cys275, and Cys278 each contribute to the Zn(2+) site.

Belongs to the ING family. As to quaternary structure, component of the Enok complex composed of at least Br140, enok, Eaf6 and Ing5.

The protein localises to the nucleus. It localises to the chromosome. In terms of biological role, component of the Enok complex which has a histone H3 acetyltransferase activity. In Drosophila melanogaster (Fruit fly), this protein is Inhibitor of growth protein 5.